Consider the following 270-residue polypeptide: Protein N-terminal and lysine N-methyltransferase EFM7 (270 aa).

The segment at 1–45 (MSDIESLNGGDLFAEPSDFYKPPPEPHFATYTRDDVPESSTSQQK) is disordered. S-adenosyl-L-methionine is bound by residues tryptophan 63, 89-91 (GAA), aspartate 111, tryptophan 158, and serine 182.

This sequence belongs to the class I-like SAM-binding methyltransferase superfamily. EFM7 family.

It is found in the cytoplasm. Functionally, S-adenosyl-L-methionine-dependent protein methyltransferase that trimethylates the N-terminal glycine 'Gly-2' of elongation factor 1-alpha, before also catalyzing the mono- and dimethylation of 'Lys-3'. The polypeptide is Protein N-terminal and lysine N-methyltransferase EFM7 (Kluyveromyces lactis (strain ATCC 8585 / CBS 2359 / DSM 70799 / NBRC 1267 / NRRL Y-1140 / WM37) (Yeast)).